A 264-amino-acid chain; its full sequence is MEQYLQLCEHVLQNGSPKSDRTGTGTISVFGYQMRFDLEKGFPIVTTKKLHMRSIIHELLWFLKGDTNIRYLQENGVRIWNEWADENGDLGPVYGKQWRSWEGANGKTVDQITEVVEQIKTNPNSRRLIVNAWNVAEIEEMALAPCHCLFQFYVNDGKLSCQLYQRSADIFLGVPFNISSYALLTMMMAQVCGLKPGEFIHTFGDAHLYNNHIEQTKLQLTRKPKQLPTMHINPEVTDLFAFTYDDFELKHYDPYPHIKAEVSV.

Residue Arg-21 coordinates dUMP. His-51 is a (6R)-5,10-methylene-5,6,7,8-tetrahydrofolate binding site. 126-127 (RR) is a binding site for dUMP. Cys-146 functions as the Nucleophile in the catalytic mechanism. DUMP contacts are provided by residues 166–169 (RSAD), Asn-177, and 207–209 (HLY). (6R)-5,10-methylene-5,6,7,8-tetrahydrofolate is bound at residue Asp-169. Ser-263 serves as a coordination point for (6R)-5,10-methylene-5,6,7,8-tetrahydrofolate.

The protein belongs to the thymidylate synthase family. Bacterial-type ThyA subfamily. Homodimer.

The protein resides in the cytoplasm. The enzyme catalyses dUMP + (6R)-5,10-methylene-5,6,7,8-tetrahydrofolate = 7,8-dihydrofolate + dTMP. Its pathway is pyrimidine metabolism; dTTP biosynthesis. Catalyzes the reductive methylation of 2'-deoxyuridine-5'-monophosphate (dUMP) to 2'-deoxythymidine-5'-monophosphate (dTMP) while utilizing 5,10-methylenetetrahydrofolate (mTHF) as the methyl donor and reductant in the reaction, yielding dihydrofolate (DHF) as a by-product. This enzymatic reaction provides an intracellular de novo source of dTMP, an essential precursor for DNA biosynthesis. This is Thymidylate synthase from Shouchella clausii (strain KSM-K16) (Alkalihalobacillus clausii).